A 458-amino-acid chain; its full sequence is NADH-quinone oxidoreductase subunit N (458 aa).

The next 13 membrane-spanning stretches (helical) occupy residues 3 to 23 (QYLF…LLFL), 29 to 49 (FGLI…TCTS), 64 to 84 (QNVK…AIAV), 92 to 112 (FSVL…SSTL), 147 to 167 (TLLG…IFVV), 188 to 208 (ILLF…HAWI), 222 to 242 (FFAV…ISNL), 265 to 285 (NILF…AFGQ), 291 to 311 (FIGF…SNSA), 320 to 340 (IAYA…VLML), 358 to 378 (VALA…FIGF), 394 to 414 (IPTA…YARI), and 437 to 457 (LLTS…VLLI).

Belongs to the complex I subunit 2 family. As to quaternary structure, NDH-1 is composed of 14 different subunits. Subunits NuoA, H, J, K, L, M, N constitute the membrane sector of the complex.

The protein resides in the cell inner membrane. The catalysed reaction is a quinone + NADH + 5 H(+)(in) = a quinol + NAD(+) + 4 H(+)(out). NDH-1 shuttles electrons from NADH, via FMN and iron-sulfur (Fe-S) centers, to quinones in the respiratory chain. The immediate electron acceptor for the enzyme in this species is believed to be ubiquinone. Couples the redox reaction to proton translocation (for every two electrons transferred, four hydrogen ions are translocated across the cytoplasmic membrane), and thus conserves the redox energy in a proton gradient. This chain is NADH-quinone oxidoreductase subunit N, found in Neorickettsia risticii (strain Illinois).